The sequence spans 237 residues: MVTRGKKYQDAIKLLDQSLAYAPAEAIDVAKKMAAAKFDETVEMHLKMGLDPKNATQQLRGVAVLPHGLGKTVRVLVFAQGEAEKAAQAAGADVYGGDELIKKVEAGFLDFDVAISTPDMMSKVGKLGKVLGRRGLMPNPKSGTVVPAEDFKQVIEEARKGRVEFKLDRSGIVHIILGKASFEGQALLENMTSVVDAIIRSKPTGAKGQYIKSAYLATTMGPGVKMDLRAVSAMGGA.

The protein belongs to the universal ribosomal protein uL1 family. Part of the 50S ribosomal subunit.

Functionally, binds directly to 23S rRNA. The L1 stalk is quite mobile in the ribosome, and is involved in E site tRNA release. Its function is as follows. Protein L1 is also a translational repressor protein, it controls the translation of the L11 operon by binding to its mRNA. In Dehalococcoides mccartyi (strain ATCC BAA-2266 / KCTC 15142 / 195) (Dehalococcoides ethenogenes (strain 195)), this protein is Large ribosomal subunit protein uL1.